The following is a 368-amino-acid chain: V-type proton ATPase subunit C (368 aa).

It belongs to the V-ATPase C subunit family. In terms of assembly, V-ATPase is a heteromultimeric enzyme composed of a peripheral catalytic V1 complex (components A to H) attached to an integral membrane V0 proton pore complex (components: a, c, c', c'' and d).

In terms of biological role, subunit of the peripheral V1 complex of vacuolar ATPase. Subunit C is necessary for the assembly of the catalytic sector of the enzyme and is likely to have a specific function in its catalytic activity. V-ATPase is responsible for acidifying a variety of intracellular compartments in eukaryotic cells. The chain is V-type proton ATPase subunit C (vatC) from Dictyostelium discoideum (Social amoeba).